We begin with the raw amino-acid sequence, 122 residues long: Large ribosomal subunit protein uL14 (122 aa).

The protein belongs to the universal ribosomal protein uL14 family. Part of the 50S ribosomal subunit. Forms a cluster with proteins L3 and L19. In the 70S ribosome, L14 and L19 interact and together make contacts with the 16S rRNA in bridges B5 and B8.

Its function is as follows. Binds to 23S rRNA. Forms part of two intersubunit bridges in the 70S ribosome. The polypeptide is Large ribosomal subunit protein uL14 (Beijerinckia indica subsp. indica (strain ATCC 9039 / DSM 1715 / NCIMB 8712)).